A 516-amino-acid polypeptide reads, in one-letter code: Flavonoid-6-hydroxylase (516 aa).

Residues 3-23 traverse the membrane as a helical segment; sequence FNAAVCAALAFISLLSYYLIW. Residue C455 participates in heme binding.

It belongs to the cytochrome P450 family. Heme is required as a cofactor.

The protein localises to the membrane. The enzyme catalyses genkwanin + reduced [NADPH--hemoprotein reductase] + O2 = scutellarein 7-methyl ether + oxidized [NADPH--hemoprotein reductase] + H2O. It catalyses the reaction (2S)-sakuranetin + reduced [NADPH--hemoprotein reductase] + O2 = (2S)-7-methylcarthamidin + oxidized [NADPH--hemoprotein reductase] + H2O + H(+). The catalysed reaction is apigenin 4',7-dimethyl ether + reduced [NADPH--hemoprotein reductase] + O2 = ladanein + oxidized [NADPH--hemoprotein reductase] + H2O + H(+). It carries out the reaction (2S)-naringenin 4',7-dimethyl ether + reduced [NADPH--hemoprotein reductase] + O2 = (2S)-carthamidin-4',7-dimethyl ether + oxidized [NADPH--hemoprotein reductase] + H2O + H(+). It participates in flavonoid metabolism. Functionally, 6-OH hydroxylase involved in the biosynthesis of polymethoxylated flavonoids natural products such as pebrellin, aroma compounds which contribute to the flavor of peppermint, and exhibit pharmacological activities such as anti-allergic, anti-oxidant, antibacterial, anti-proliferative, and anti-inflammatory effects. Catalyzes the 6-hydroxylation of 7-O-methylated precursors such as the conversion of genkwanin (GENK) to scutellarein-7-methyl ether (SCU7Me). Can also use apigenin-7,4'-dimethyl ether (AdM), naringenin-7-methyl ether (SAK) and naringenin-7,4'-dimethyl ether (NdM) as substrates. This Mentha piperita (Peppermint) protein is Flavonoid-6-hydroxylase.